The following is a 201-amino-acid chain: Peptidyl-tRNA hydrolase (201 aa).

TRNA is bound at residue Tyr-14. His-19 (proton acceptor) is an active-site residue. Positions 64, 66, and 112 each coordinate tRNA.

Belongs to the PTH family. Monomer.

Its subcellular location is the cytoplasm. The enzyme catalyses an N-acyl-L-alpha-aminoacyl-tRNA + H2O = an N-acyl-L-amino acid + a tRNA + H(+). Hydrolyzes ribosome-free peptidyl-tRNAs (with 1 or more amino acids incorporated), which drop off the ribosome during protein synthesis, or as a result of ribosome stalling. Its function is as follows. Catalyzes the release of premature peptidyl moieties from peptidyl-tRNA molecules trapped in stalled 50S ribosomal subunits, and thus maintains levels of free tRNAs and 50S ribosomes. The polypeptide is Peptidyl-tRNA hydrolase (Afipia carboxidovorans (strain ATCC 49405 / DSM 1227 / KCTC 32145 / OM5) (Oligotropha carboxidovorans)).